The chain runs to 459 residues: Cobyrinate a,c-diamide synthase (459 aa).

The GATase cobBQ-type domain maps to 252-446 (TLALADDEAF…LHVHFAQRPE (195 aa)). Catalysis depends on cysteine 334, which acts as the Nucleophile.

This sequence belongs to the CobB/CbiA family. As to quaternary structure, monomer. Mg(2+) is required as a cofactor.

It catalyses the reaction cob(II)yrinate + 2 L-glutamine + 2 ATP + 2 H2O = cob(II)yrinate a,c diamide + 2 L-glutamate + 2 ADP + 2 phosphate + 2 H(+). Its pathway is cofactor biosynthesis; adenosylcobalamin biosynthesis; cob(II)yrinate a,c-diamide from sirohydrochlorin (anaerobic route): step 10/10. Its function is as follows. Catalyzes the ATP-dependent amidation of the two carboxylate groups at positions a and c of cobyrinate, using either L-glutamine or ammonia as the nitrogen source. Is able to use other nucleotide triphosphates as substrate, such as GTP or UTP, although less efficiently than ATP. The protein is Cobyrinate a,c-diamide synthase of Salmonella typhimurium (strain LT2 / SGSC1412 / ATCC 700720).